A 447-amino-acid chain; its full sequence is Phosphoglucosamine mutase (447 aa).

The active-site Phosphoserine intermediate is serine 102. Mg(2+) is bound by residues serine 102, aspartate 241, aspartate 243, and aspartate 245. A Phosphoserine modification is found at serine 102.

The protein belongs to the phosphohexose mutase family. Requires Mg(2+) as cofactor. In terms of processing, activated by phosphorylation.

It carries out the reaction alpha-D-glucosamine 1-phosphate = D-glucosamine 6-phosphate. In terms of biological role, catalyzes the conversion of glucosamine-6-phosphate to glucosamine-1-phosphate. This Pseudoalteromonas atlantica (strain T6c / ATCC BAA-1087) protein is Phosphoglucosamine mutase.